The following is a 404-amino-acid chain: MKCPGVSDCVATVRHDNVFAIAAGLRWSAAVPPLHKGDAVTKLLVGAIAGGMLACAAILGDGIASADTALIVPGTAPSPYGPLRSLYHFNPAMQPQIGANYYNPTATRHVVSYPGSFWPVTGLNSPTVGSSVSAGTNNLDAAIRSTDGPIFVAGLSQGTLVLDREQARLANDPTAPPPGQLTFIKAGDPNNLLWRAFRPGTHVPIIDYTVPAPAESQYDTINIVGQYDIFSDPPNRPGNLLADLNAIAAGGYYGHSATAFSDPARVAPRDITTTTNSLGATTTTYFIRTDQLPLVRALVDMAGLPPQAAGTVDAALRPIIDRAYQPGPAPAVNPRDLVQGIRGIPAIAPAIAIPIGSTTGASAATSTAAATAAATNALRGANVGPGANKALSMVRGLLPKGKKH.

Residues 1 to 42 (MKCPGVSDCVATVRHDNVFAIAAGLRWSAAVPPLHKGDAVTK) are Periplasmic-facing. The helical transmembrane segment at 43-63 (LLVGAIAGGMLACAAILGDGI) threads the bilayer. The Cytoplasmic segment spans residues 64–404 (ASADTALIVP…RGLLPKGKKH (341 aa)). The PE-PPE domain maps to 104–325 (PTATRHVVSY…LRPIIDRAYQ (222 aa)).

This sequence belongs to the mycobacterial PPE family.

Its subcellular location is the cell inner membrane. The catalysed reaction is 3 3'-(hydroxy)phthioceranyl-2'-palmitoyl(stearoyl)-2-O-sulfo-alpha,alpha-trehalose = 3,6,6'-tris-(hydroxy)phthioceranyl-2-palmitoyl(stearoyl)-2'-sulfo-alpha-alpha-trehalose + 2 2'-palmitoyl/stearoyl-2-O-sulfo-alpha,alpha-trehalose.. With respect to regulation, activity is potentiated by the SL-1 transporter MmpL8. Inhibited by the lipase inhibitor tetrahydrolipstatin (THL). Its function is as follows. Involved in the final steps of the cell wall sulfolipid-1 (SL-1) biosynthesis. Catalyzes two successive acylations of the precursor 2-palmitoyl-3-(C43)-phthioceranyl-alpha, alpha'-D-trehalose-2'-sulfate (SL1278) to yield the tetraacylated sulfolipid SL-1. The polypeptide is SL1278 acyltransferase Chp1 (Mycobacterium tuberculosis (strain ATCC 25618 / H37Rv)).